Here is a 172-residue protein sequence, read N- to C-terminus: 3-hydroxydecanoyl-[acyl-carrier-protein] dehydratase (172 aa).

The active site involves histidine 71.

The protein belongs to the thioester dehydratase family. FabA subfamily. Homodimer.

Its subcellular location is the cytoplasm. The enzyme catalyses a (3R)-hydroxyacyl-[ACP] = a (2E)-enoyl-[ACP] + H2O. It catalyses the reaction (3R)-hydroxydecanoyl-[ACP] = (2E)-decenoyl-[ACP] + H2O. It carries out the reaction (2E)-decenoyl-[ACP] = (3Z)-decenoyl-[ACP]. Its pathway is lipid metabolism; fatty acid biosynthesis. Functionally, necessary for the introduction of cis unsaturation into fatty acids. Catalyzes the dehydration of (3R)-3-hydroxydecanoyl-ACP to E-(2)-decenoyl-ACP and then its isomerization to Z-(3)-decenoyl-ACP. Can catalyze the dehydratase reaction for beta-hydroxyacyl-ACPs with saturated chain lengths up to 16:0, being most active on intermediate chain length. The chain is 3-hydroxydecanoyl-[acyl-carrier-protein] dehydratase from Aliivibrio salmonicida (strain LFI1238) (Vibrio salmonicida (strain LFI1238)).